Reading from the N-terminus, the 360-residue chain is Phospho-N-acetylmuramoyl-pentapeptide-transferase (360 aa).

The next 10 helical transmembrane spans lie at 26–46, 70–90, 94–114, 132–152, 168–188, 199–219, 236–256, 263–283, 288–308, and 338–358; these read AILSVLTALGLSLWMGPIMIK, GTPTMGGIMILAAISITILLW, SNPYVWAVLTVLLGYGAVGFV, WKYFWQSLIAFVVAFALYAYG, VMPQLGLMYIILTYFVIVGTS, GLAIMPTVLVAAGFAVIAWAT, ASELVVVCTAIVGAGLGFLWF, VFMGDVGSLALGGALGTIAVL, LVLVIMGGVFVMETLSVILQV, and VIVRFWIISMVLVLIGLATLK.

This sequence belongs to the glycosyltransferase 4 family. MraY subfamily. The cofactor is Mg(2+).

The protein resides in the cell inner membrane. It catalyses the reaction UDP-N-acetyl-alpha-D-muramoyl-L-alanyl-gamma-D-glutamyl-meso-2,6-diaminopimeloyl-D-alanyl-D-alanine + di-trans,octa-cis-undecaprenyl phosphate = di-trans,octa-cis-undecaprenyl diphospho-N-acetyl-alpha-D-muramoyl-L-alanyl-D-glutamyl-meso-2,6-diaminopimeloyl-D-alanyl-D-alanine + UMP. The protein operates within cell wall biogenesis; peptidoglycan biosynthesis. Its function is as follows. Catalyzes the initial step of the lipid cycle reactions in the biosynthesis of the cell wall peptidoglycan: transfers peptidoglycan precursor phospho-MurNAc-pentapeptide from UDP-MurNAc-pentapeptide onto the lipid carrier undecaprenyl phosphate, yielding undecaprenyl-pyrophosphoryl-MurNAc-pentapeptide, known as lipid I. The protein is Phospho-N-acetylmuramoyl-pentapeptide-transferase of Vibrio parahaemolyticus serotype O3:K6 (strain RIMD 2210633).